The following is a 179-amino-acid chain: Large ribosomal subunit protein uL6c (179 aa).

Belongs to the universal ribosomal protein uL6 family. As to quaternary structure, part of the 50S ribosomal subunit.

The protein localises to the plastid. Its subcellular location is the chloroplast. Binds 23S rRNA. This is Large ribosomal subunit protein uL6c (rpl6) from Guillardia theta (Cryptophyte).